Here is a 148-residue protein sequence, read N- to C-terminus: UPF0178 protein lpl0088 (148 aa).

It belongs to the UPF0178 family.

In Legionella pneumophila (strain Lens), this protein is UPF0178 protein lpl0088.